Reading from the N-terminus, the 212-residue chain is Endothelin-1 (212 aa).

A signal peptide spans M1–G17. Positions A18–S50 are excised as a propeptide. 2 cysteine pairs are disulfide-bonded: C53–C67 and C55–C63. The propeptide occupies V74–W212. The endothelin-like stretch occupies residues C109 to C123. 2 stretches are compositionally biased toward basic and acidic residues: residues R168–T181 and S189–V205. The segment at R168–W212 is disordered.

The protein belongs to the endothelin/sarafotoxin family. In terms of tissue distribution, expressed in lung, placental stem villi vessels and in cultured placental vascular smooth muscle cells.

The protein localises to the secreted. Endothelins are endothelium-derived vasoconstrictor peptides. Probable ligand for G-protein coupled receptors EDNRA and EDNRB which activates PTK2B, BCAR1, BCAR3 and, GTPases RAP1 and RHOA cascade in glomerular mesangial cells. Also binds the DEAR/FBXW7-AS1 receptor. Promotes mesenteric arterial wall remodeling via activation of ROCK signaling and subsequent colocalization of NFATC3 with F-actin filaments. NFATC3 then translocates to the nucleus where it subsequently promotes the transcription of the smooth muscle hypertrophy and differentiation marker ACTA2. This is Endothelin-1 (EDN1) from Homo sapiens (Human).